Reading from the N-terminus, the 160-residue chain is Ribonuclease HI (160 aa).

Positions 4 to 147 (TPNSVTLYTD…CDRLAVAAYQ (144 aa)) constitute an RNase H type-1 domain. Mg(2+)-binding residues include Asp13, Glu52, Asp74, and Asp139.

The protein belongs to the RNase H family. In terms of assembly, monomer. Requires Mg(2+) as cofactor.

It is found in the cytoplasm. The catalysed reaction is Endonucleolytic cleavage to 5'-phosphomonoester.. Its function is as follows. Endonuclease that specifically degrades the RNA of RNA-DNA hybrids. This is Ribonuclease HI (rnhA) from Synechocystis sp. (strain ATCC 27184 / PCC 6803 / Kazusa).